Reading from the N-terminus, the 156-residue chain is NAD(P)H-quinone oxidoreductase subunit N (156 aa).

The protein belongs to the complex I NdhN subunit family. NDH-1 can be composed of about 15 different subunits; different subcomplexes with different compositions have been identified which probably have different functions.

The protein resides in the cellular thylakoid membrane. The catalysed reaction is a plastoquinone + NADH + (n+1) H(+)(in) = a plastoquinol + NAD(+) + n H(+)(out). It carries out the reaction a plastoquinone + NADPH + (n+1) H(+)(in) = a plastoquinol + NADP(+) + n H(+)(out). In terms of biological role, NDH-1 shuttles electrons from an unknown electron donor, via FMN and iron-sulfur (Fe-S) centers, to quinones in the respiratory and/or the photosynthetic chain. The immediate electron acceptor for the enzyme in this species is believed to be plastoquinone. Couples the redox reaction to proton translocation, and thus conserves the redox energy in a proton gradient. Cyanobacterial NDH-1 also plays a role in inorganic carbon-concentration. The protein is NAD(P)H-quinone oxidoreductase subunit N of Prochlorococcus marinus subsp. pastoris (strain CCMP1986 / NIES-2087 / MED4).